Here is a 58-residue protein sequence, read N- to C-terminus: Small integral membrane protein 11 (58 aa).

A helical membrane pass occupies residues 9–29; sequence FPLLLYILAAKTLILCLAFAG. Positions 29 to 58 form a coiled coil; sequence GVKVYQRKRLEAKQQKVEAEKRKQAEKKES.

It is found in the membrane. The chain is Small integral membrane protein 11 (SMIM11) from Bos taurus (Bovine).